The chain runs to 371 residues: MEVSSEQQLFFMREAVALGERGRIFAPPNPWVGCVIVKNGCIIGRGWHKGIGSPHAEVCAFQDQTSSLVGADVYVTLEPCCHFGRTPPCVDLLIKSKVSSVYIALLDPDPRVCKRGVARLKEAGISVYVGIGHEEAKASLQPYLHQRETGLPWVVMKTAASLDGQTSDRRGISQWISGEQARLDVGRLRAESQAVIVGSRTVCLDNPRLSARMPSGDLYERQPLRVVVDSRGSVPLDARVWNPDSGNVLLATTEQCSKEHIQKLEDRGVEVWKSSPQQVDLKRLLQYLAEKGCLQVLVEGGARLHSAFWREHLVNAGVIYWGPKFLGDQGSPMLRDLQLCLDNAEHVKITKTFLVGDSVKTCFECVGREDG.

The interval 1–150 (MEVSSEQQLF…QPYLHQRETG (150 aa)) is deaminase. Positions 6–128 (EQQLFFMREA…RLKEAGISVY (123 aa)) constitute a CMP/dCMP-type deaminase domain. Residue histidine 55 participates in Zn(2+) binding. Residue glutamate 57 is the Proton donor of the active site. Zn(2+) is bound by residues cysteine 80 and cysteine 89. A reductase region spans residues 151–371 (LPWVVMKTAA…CFECVGREDG (221 aa)). NADP(+) is bound at residue alanine 159. Serine 173 contributes to the substrate binding site. NADP(+) is bound at residue tryptophan 175. Arginine 189 contacts substrate. Positions 201 and 205 each coordinate NADP(+). Leucine 209 and arginine 212 together coordinate substrate. Serine 230 is a binding site for NADP(+). Glutamate 299 serves as a coordination point for substrate. 301–307 (GARLHSA) serves as a coordination point for NADP(+).

This sequence in the N-terminal section; belongs to the cytidine and deoxycytidylate deaminase family. In the C-terminal section; belongs to the HTP reductase family. It depends on Zn(2+) as a cofactor.

It catalyses the reaction 2,5-diamino-6-hydroxy-4-(5-phosphoribosylamino)-pyrimidine + H2O + H(+) = 5-amino-6-(5-phospho-D-ribosylamino)uracil + NH4(+). The enzyme catalyses 5-amino-6-(5-phospho-D-ribitylamino)uracil + NADP(+) = 5-amino-6-(5-phospho-D-ribosylamino)uracil + NADPH + H(+). It functions in the pathway cofactor biosynthesis; riboflavin biosynthesis; 5-amino-6-(D-ribitylamino)uracil from GTP: step 2/4. Its pathway is cofactor biosynthesis; riboflavin biosynthesis; 5-amino-6-(D-ribitylamino)uracil from GTP: step 3/4. Converts 2,5-diamino-6-(ribosylamino)-4(3h)-pyrimidinone 5'-phosphate into 5-amino-6-(ribosylamino)-2,4(1h,3h)-pyrimidinedione 5'-phosphate. This is Riboflavin biosynthesis protein RibD (ribD) from Chlamydia muridarum (strain MoPn / Nigg).